A 40-amino-acid polypeptide reads, in one-letter code: Photosystem I reaction center subunit IX (40 aa).

A helical transmembrane segment spans residues 12 to 34 (APVLLTAWMSLTAGMIIEIQRFF).

This sequence belongs to the PsaJ family.

The protein localises to the plastid. It localises to the chloroplast thylakoid membrane. In terms of biological role, may help in the organization of the PsaE and PsaF subunits. The sequence is that of Photosystem I reaction center subunit IX from Emiliania huxleyi (Coccolithophore).